The primary structure comprises 170 residues: UPF0161 protein At3g09310 (170 aa).

Disordered regions lie at residues 49-70 (CLSA…GEEL) and 147-170 (SGIK…QRKI). Acidic residues predominate over residues 154–170 (GDEEEEDNYDDEDQRKI).

Belongs to the UPF0161 family.

The sequence is that of UPF0161 protein At3g09310 from Arabidopsis thaliana (Mouse-ear cress).